Here is a 313-residue protein sequence, read N- to C-terminus: 18S rRNA aminocarboxypropyltransferase (313 aa).

The segment at 1–30 (MGKGKNKMHEPKNGRPQRGANGHSSRQNHR) is disordered. The S-adenosyl-L-methionine site is built by Ser62, Val110, Leu133, and Trp148. The segment covering 215–228 (KETQERKSRAKEED) has biased composition (basic and acidic residues). Residues 215–313 (KETQERKSRA…SYDPLGNLIR (99 aa)) form a disordered region. Residues 237–246 (RRGNGSQSDT) are compositionally biased toward polar residues. A compositionally biased stretch (acidic residues) spans 247-257 (SESEENSEQSD). Ser286 and Ser289 each carry phosphoserine.

The protein belongs to the TDD superfamily. TSR3 family.

It is found in the cytoplasm. It localises to the nucleus. The catalysed reaction is an N(1)-methylpseudouridine in rRNA + S-adenosyl-L-methionine = N(1)-methyl-N(3)-[(3S)-3-amino-3-carboxypropyl]pseudouridine in rRNA + S-methyl-5'-thioadenosine + H(+). It catalyses the reaction N(1)-methylpseudouridine(1191) in yeast 18S rRNA + S-adenosyl-L-methionine = N(1)-methyl-N(3)-[(3S)-3-amino-3-carboxypropyl]pseudouridine(1191) in yeast 18S rRNA + S-methyl-5'-thioadenosine + H(+). In terms of biological role, aminocarboxypropyltransferase that catalyzes the aminocarboxypropyl transfer on pseudouridine at position 1191 (Psi1191) in 18S rRNA. It constitutes the last step in biosynthesis of the hypermodified N1-methyl-N3-(3-amino-3-carboxypropyl) pseudouridine (m1acp3-Psi) conserved in eukaryotic 18S rRNA. Required for processing 35S pre-rRNA at site D. The chain is 18S rRNA aminocarboxypropyltransferase from Saccharomyces cerevisiae (strain ATCC 204508 / S288c) (Baker's yeast).